Consider the following 629-residue polypeptide: Glutamyl-tRNA(Gln) amidotransferase subunit E (629 aa).

Residues proline 405 to lysine 426 are disordered.

This sequence belongs to the GatB/GatE family. GatE subfamily. As to quaternary structure, heterodimer of GatD and GatE.

The enzyme catalyses L-glutamyl-tRNA(Gln) + L-glutamine + ATP + H2O = L-glutaminyl-tRNA(Gln) + L-glutamate + ADP + phosphate + H(+). Allows the formation of correctly charged Gln-tRNA(Gln) through the transamidation of misacylated Glu-tRNA(Gln) in organisms which lack glutaminyl-tRNA synthetase. The reaction takes place in the presence of glutamine and ATP through an activated gamma-phospho-Glu-tRNA(Gln). The GatDE system is specific for glutamate and does not act on aspartate. The protein is Glutamyl-tRNA(Gln) amidotransferase subunit E of Thermococcus sibiricus (strain DSM 12597 / MM 739).